The following is a 748-amino-acid chain: Transcription factor hmgR (748 aa).

The segment at residues 24 to 59 (CISCRQRKAKCDLGTGPDGLPLGPPCAKCRREQKPC) is a DNA-binding region (zn(2)-C6 fungal-type). 2 disordered regions span residues 108–142 (SQED…QIDL) and 661–683 (REST…DEHA).

It is found in the nucleus. Functionally, transcription factor; part of the L-tyrosine degradation gene cluster that mediates the biosynthesis of the brownish pigment pyomelanin as an alternative melanin. Acts as a transcriptional activator for the genes of the tyrosine degradation cluster. This Aspergillus fumigatus (strain ATCC MYA-4609 / CBS 101355 / FGSC A1100 / Af293) (Neosartorya fumigata) protein is Transcription factor hmgR.